Consider the following 166-residue polypeptide: Prorelaxin H1 (166 aa).

A signal peptide spans 1–5 (SRAVA). 3 disulfides stabilise this stretch: Cys16/Cys153, Cys28/Cys166, and Cys152/Cys157. Residues 37-139 (SLSQEDAPQT…KYLGLDTHSQ (103 aa)) constitute a propeptide, connecting peptide.

This sequence belongs to the insulin family. Heterodimer of a B chain and an A chain linked by two disulfide bonds. Expressed in the corpus luteum of pregnancy but not in the placenta.

The protein localises to the secreted. Functionally, relaxin is an ovarian hormone that acts with estrogen to produce dilatation of the birth canal in many mammals. May be involved in remodeling of connective tissues during pregnancy, promoting growth of pubic ligaments and ripening of the cervix. This Pan troglodytes (Chimpanzee) protein is Prorelaxin H1 (RNL1).